The chain runs to 286 residues: Plasma membrane ascorbate-dependent reductase CYBRD1 (286 aa).

The Cytoplasmic segment spans residues 1 to 7; the sequence is MAMEGYR. The chain crosses the membrane as a helical span at residues 8-32; it reads GFLGLLVSALLVGFLSVIFVLIWVL. In terms of domain architecture, Cytochrome b561 spans 15-220; the sequence is SALLVGFLSV…FGALIFWIVT (206 aa). At 33-47 the chain is on the extracellular side; it reads HFREGLGWDGGALEF. The helical transmembrane segment at 48-69 threads the bilayer; sequence NWHPVLAVTGFVFIQGIAIIVY. The heme b site is built by His50, Arg70, and Lys79. The Cytoplasmic segment spans residues 70-78; that stretch reads RLPWTWKCS. L-ascorbate-binding residues include Lys79 and Lys83. Residues 79–105 form a helical membrane-spanning segment; the sequence is KFLMKSIHAGLNAVAAILAIISVVAVF. A heme b-binding site is contributed by His86. Residues 106-118 are Extracellular-facing; that stretch reads DYHNVRKIPHMYS. Residue His108 participates in Fe(3+) binding. Heme b-binding positions include 115-118 and His120; that span reads HMYS. A helical transmembrane segment spans residues 119–144; it reads LHSWVGLTVLILYIQQLVVGFFIFLL. The Cytoplasmic segment spans residues 145–151; it reads PWAPPSL. Residue Arg152 participates in L-ascorbate binding. The chain crosses the membrane as a helical span at residues 152–179; that stretch reads RAIVMPIHVYSGLLLFGTVIATVLMGVT. Heme b contacts are provided by His159 and Glu180. The Extracellular portion of the chain corresponds to 180 to 197; it reads EKLFFVLKNPSYHSFPPE. A helical membrane pass occupies residues 198-222; it reads GVFTNTLGLLILVFGALIFWIVTRP. The Cytoplasmic segment spans residues 223–286; that stretch reads QWKRPREPGS…LVDTGQRSTM (64 aa). Lys225 contacts heme b. Phosphoserine is present on Ser232. A Phosphothreonine modification is found at Thr285.

In terms of assembly, homodimer. Heme b serves as cofactor. In terms of tissue distribution, highly expressed in all regions of the small intestine and colon studied in suckling animals. However, after weaning, when iron absorption declines significantly, strong expression is retained only in the duodenum. Also expressed in respiratory epithelium.

It is found in the cell membrane. The protein resides in the apical cell membrane. The enzyme catalyses Fe(3+)(out) + L-ascorbate(in) = monodehydro-L-ascorbate radical(in) + Fe(2+)(out) + H(+). The catalysed reaction is Cu(2+)(out) + L-ascorbate(in) = Cu(+)(out) + monodehydro-L-ascorbate radical(in) + H(+). It carries out the reaction monodehydro-L-ascorbate radical(out) + L-ascorbate(in) = monodehydro-L-ascorbate radical(in) + L-ascorbate(out). In terms of biological role, plasma membrane reductase that uses cytoplasmic ascorbate as an electron donor to reduce extracellular Fe(3+) into Fe(2+). Probably functions in dietary iron absorption at the brush border of duodenal enterocytes by producing Fe(2+), the divalent form of iron that can be transported into enterocytes. It is also able to reduce extracellular monodehydro-L-ascorbate and may be involved in extracellular ascorbate regeneration by erythrocytes in blood. May also act as a ferrireductase in airway epithelial cells. May also function as a cupric transmembrane reductase. The sequence is that of Plasma membrane ascorbate-dependent reductase CYBRD1 from Rattus norvegicus (Rat).